We begin with the raw amino-acid sequence, 366 residues long: Phospho-N-acetylmuramoyl-pentapeptide-transferase (366 aa).

The next 10 membrane-spanning stretches (helical) occupy residues 27-47 (AALF…IASL), 71-91 (TPTM…LLWA), 93-113 (LSSI…AIGF), 138-158 (FVIA…AGAA), 174-194 (LMLN…VGAG), 205-225 (GLAI…AYLA), 245-265 (LAVI…FNAP), 268-288 (AIFM…TVAV), 297-317 (VIIG…VFWF), and 343-363 (QVVI…LSTL).

The protein belongs to the glycosyltransferase 4 family. MraY subfamily. Mg(2+) is required as a cofactor.

It is found in the cell inner membrane. It catalyses the reaction UDP-N-acetyl-alpha-D-muramoyl-L-alanyl-gamma-D-glutamyl-meso-2,6-diaminopimeloyl-D-alanyl-D-alanine + di-trans,octa-cis-undecaprenyl phosphate = di-trans,octa-cis-undecaprenyl diphospho-N-acetyl-alpha-D-muramoyl-L-alanyl-D-glutamyl-meso-2,6-diaminopimeloyl-D-alanyl-D-alanine + UMP. It functions in the pathway cell wall biogenesis; peptidoglycan biosynthesis. In terms of biological role, catalyzes the initial step of the lipid cycle reactions in the biosynthesis of the cell wall peptidoglycan: transfers peptidoglycan precursor phospho-MurNAc-pentapeptide from UDP-MurNAc-pentapeptide onto the lipid carrier undecaprenyl phosphate, yielding undecaprenyl-pyrophosphoryl-MurNAc-pentapeptide, known as lipid I. This chain is Phospho-N-acetylmuramoyl-pentapeptide-transferase, found in Sinorhizobium medicae (strain WSM419) (Ensifer medicae).